We begin with the raw amino-acid sequence, 598 residues long: Chaperone protein DnaK (598 aa).

The residue at position 180 (threonine 180) is a Phosphothreonine; by autocatalysis.

Belongs to the heat shock protein 70 family.

Functionally, acts as a chaperone. The sequence is that of Chaperone protein DnaK from Thermosipho africanus (strain TCF52B).